The following is a 260-amino-acid chain: DNA import protein CedA (260 aa).

The next 6 helical transmembrane spans lie at 13–33, 47–67, 110–130, 140–160, 169–189, and 220–240; these read LLAS…VPVY, IYVV…GELL, ALIQ…ALTF, IVYQ…SIPF, AFIG…QFLA, and IITS…GFSM.

As to quaternary structure, forms a complex composed of CedA, CedA1 and CedA2.

It is found in the cell membrane. Functionally, part of the Ced system, which is involved in DNA import. In Sulfolobus acidocaldarius (strain ATCC 33909 / DSM 639 / JCM 8929 / NBRC 15157 / NCIMB 11770), this protein is DNA import protein CedA.